We begin with the raw amino-acid sequence, 404 residues long: Ammonium transporter (404 aa).

9 helical membrane-spanning segments follow: residues Val7–Tyr27, Phe44–Ala64, Leu96–Phe116, Phe125–Trp145, Phe158–Val178, Ile227–Ile247, Leu254–Val274, Phe277–Leu297, and Ile352–Ile372.

This sequence belongs to the ammonia transporter channel (TC 1.A.11.2) family. In terms of assembly, interacts with NrgB for a correct localization of the latter. GlnK-AmtB complex interacts with TnrA.

The protein localises to the cell membrane. Its function is as follows. Functions as an ammonium and methylammonium transporter in the absence of glutamine. Required for ammonium utilization at low concentrations or at low pH values, when ammonium is the single nitrogen source. Required for binding of NrgB to the membrane. Interaction between GlnK-AmtB complex and TnrA protects TnrA from proteolytic degradation. In Bacillus subtilis (strain 168), this protein is Ammonium transporter.